The sequence spans 867 residues: 2-methylcitrate dehydratase (2-methyl-trans-aconitate forming) (867 aa).

Positions 410, 476, and 479 each coordinate [4Fe-4S] cluster.

This sequence belongs to the aconitase/IPM isomerase family. The cofactor is [4Fe-4S] cluster.

It carries out the reaction (2S,3S)-2-methylcitrate = 2-methyl-trans-aconitate + H2O. The catalysed reaction is citrate = D-threo-isocitrate. Its pathway is organic acid metabolism; propanoate degradation. With respect to regulation, inhibited by ferricyanide and EDTA. In terms of biological role, involved in the catabolism of short chain fatty acids (SCFA) via the 2-methylcitrate cycle II (propionate degradation route). In vivo under anaerobic conditions, AcnD catalyzes the stereospecific dehydration of (2S,3S)-methylcitrate (2-MC) to yield the trans isomer of 2-methyl-aconitate (2-MCA). AcnD can also accept citrate and cis-aconitate, but with a lower efficiency. 2-methylisocitrate and isocitrate are not substrates. The polypeptide is 2-methylcitrate dehydratase (2-methyl-trans-aconitate forming) (acnD) (Shewanella oneidensis (strain ATCC 700550 / JCM 31522 / CIP 106686 / LMG 19005 / NCIMB 14063 / MR-1)).